A 129-amino-acid chain; its full sequence is Large ribosomal subunit protein bL12 (129 aa).

Belongs to the bacterial ribosomal protein bL12 family. As to quaternary structure, homodimer. Part of the ribosomal stalk of the 50S ribosomal subunit. Forms a multimeric L10(L12)X complex, where L10 forms an elongated spine to which 2 to 4 L12 dimers bind in a sequential fashion. Binds GTP-bound translation factors.

Forms part of the ribosomal stalk which helps the ribosome interact with GTP-bound translation factors. Is thus essential for accurate translation. The protein is Large ribosomal subunit protein bL12 of Pelotomaculum thermopropionicum (strain DSM 13744 / JCM 10971 / SI).